A 328-amino-acid chain; its full sequence is Cytochrome f (328 aa).

The first 44 residues, 1–44 (MRNPDTLGLWTKTMVALRRFTVLAIATVSVFLITDLGLPQAASA), serve as a signal peptide directing secretion. Residues tyrosine 45, cysteine 66, cysteine 69, and histidine 70 each coordinate heme. A helical transmembrane segment spans residues 296 to 313 (FLVLFLAGIMLSQILLVL).

The protein belongs to the cytochrome f family. The 4 large subunits of the cytochrome b6-f complex are cytochrome b6, subunit IV (17 kDa polypeptide, PetD), cytochrome f and the Rieske protein, while the 4 small subunits are PetG, PetL, PetM and PetN. The complex functions as a dimer. The cofactor is heme.

Its subcellular location is the cellular thylakoid membrane. Its function is as follows. Component of the cytochrome b6-f complex, which mediates electron transfer between photosystem II (PSII) and photosystem I (PSI), cyclic electron flow around PSI, and state transitions. The chain is Cytochrome f (petA) from Synechocystis sp. (strain ATCC 27184 / PCC 6803 / Kazusa).